A 686-amino-acid chain; its full sequence is NADH-ubiquinone oxidoreductase chain 5 (686 aa).

Helical transmembrane passes span 3–23 (LIILFLPFVGAFISGFLGRFV), 40–60 (ALLSLYYWLSINELIIGLFSF), 101–121 (ITLPFLFTVLFISFLIHLFSV), 139–159 (LFTFFMAILVTGANYFVLFVG), 160–180 (WEGIGVVSYLLINFWFTRIQA), 198–218 (LSIAYFVMLPAFGSADFSTVF), 222–242 (AYINQTTITIIGFLLLVGAMA), 261–281 (TPVSALIHAATLVTAGSYLLI), 293–313 (VLLVITIIGASTAFFAATCGL), 321–341 (IIAFSTISQLGYMVMAIGLSQ), 350–370 (LFHAYFKALLFLGAGSVIHAF), 382–402 (LINFLPFTYAVMLVGTLSLLA), 432–452 (ILGSVTAGLTAFYSFRLISLV), 472–492 (ITVIIPLAVLAIFSIFFGYVT), 526–546 (LIFKLLPTIFSLAGTLFALYL), 635–655 (ALYITLGLLSLLFIVFAPMLV), and 665–685 (LIILFIFTLIVNSAYLNKKLS).

The protein belongs to the complex I subunit 5 family.

It is found in the mitochondrion inner membrane. It carries out the reaction a ubiquinone + NADH + 5 H(+)(in) = a ubiquinol + NAD(+) + 4 H(+)(out). In terms of biological role, core subunit of the mitochondrial membrane respiratory chain NADH dehydrogenase (Complex I) that is believed to belong to the minimal assembly required for catalysis. Complex I functions in the transfer of electrons from NADH to the respiratory chain. The immediate electron acceptor for the enzyme is believed to be ubiquinone. This chain is NADH-ubiquinone oxidoreductase chain 5 (ND5), found in Schizophyllum commune (Split gill fungus).